The following is a 449-amino-acid chain: Plasmepsin IV (449 aa).

At 1 to 37 (MALTVKEEEFSNTLIKNASAFDRLKLGNLKNLKIQKK) the chain is on the cytoplasmic side. Residues 1-121 (MALTVKEEEF…SGYAQKGYLG (121 aa)) constitute a propeptide that is removed on maturation. A helical; Signal-anchor for type II membrane protein transmembrane segment spans residues 38 to 58 (LQFLYLILFVLITGVFFFFLI). Residues 59 to 449 (GNFYSHRKLY…SVGFAVAKNL (391 aa)) are Lumenal-facing. One can recognise a Peptidase A1 domain in the interval 137–444 (FYGEGQIGTN…DYEKESVGFA (308 aa)). Asp-155 is a catalytic residue. Residues Cys-168 and Cys-173 are joined by a disulfide bond. The active site involves Asp-335. Cysteines 370 and 406 form a disulfide.

Belongs to the peptidase A1 family. Component of the hemozoin formation complex (HFC) composed of falcipains FP2A and/or FP2B, plasmepsins PMII, PMIII/HAP and PMIV, heme detoxifying protein HDP and falcilysin FLN. The HFC complex is involved in hemoglobin degradation and detoxification of heme in the food vacuole during the asexual blood stage. Proteolytically cleaved into the soluble active mature form by cysteine proteases in the digestive vacuole of trophozoites. Proteolysis requires an acidic environment. Autoprocessing or transprocessing by other plasmepsins such as PMII may serve as an alternate activation system.

It localises to the membrane. The protein localises to the vacuole lumen. It carries out the reaction Hydrolysis of the bonds linking certain hydrophobic residues in hemoglobin or globin. Also cleaves small molecules substrates such as Ala-Leu-Glu-Arg-Thr-Phe-|-Phe(NO2)-Ser-Phe-Pro-Thr.. Inhibited by pepstatin A. Functionally, during the asexual blood stage, catalyzes the cleavage of denatured host hemoglobin (Hb) or globins. Digestion of host Hb is an essential step which provides the parasite with amino acids for protein synthesis, and regulates osmolarity. This Plasmodium falciparum (isolate HB3) protein is Plasmepsin IV.